The primary structure comprises 728 residues: Leucine-rich repeat and calponin homology domain-containing protein 1 (728 aa).

Basic residues predominate over residues 24-36; that stretch reads HHPHHHHHHHQHH. Residues 24-57 are disordered; it reads HHPHHHHHHHQHHGGTGAPGGAGGGGGGSGGFNL. The span at 37–54 shows a compositional bias: gly residues; that stretch reads GGTGAPGGAGGGGGGSGG. LRR repeat units lie at residues 98–119, 121–143, 144–166, 167–187, 189–210, 212–234, 235–255, 257–278, and 283–304; these read DTVQADLSKNRLVEVPMELCHF, SLEILNLYHNCIRVIPEAIVNLQ, MLTYLNLSRNQLSALPACLCGLP, LKVLIASNNKLGSLPEEIGQL, QLMELDVSCNEITALPQQIGQL, SLRELNVRRNYLKVLPQELVDLS, LVKFDFSCNKVLVIPICFREM, QLQVLLLENNPLQSPPAQICTK, and IFKYLSIQACQIKTADSLYLHT. Over residues 311–322 the composition is skewed to basic and acidic residues; it reads HQHVEDGKKDSD. The tract at residues 311 to 348 is disordered; sequence HQHVEDGKKDSDSGVGSDNGDKRLSATEPSDEDTVSLN. Ser-370 is modified (phosphoserine). The disordered stretch occupies residues 377–398; the sequence is HQEFQPEPSLLGDSTNSGEERD. Ser-409 bears the Phosphoserine mark. The span at 516-525 shows a compositional bias: polar residues; that stretch reads LQSNGSQYSP. The tract at residues 516 to 547 is disordered; the sequence is LQSNGSQYSPNEIRENSPAVSPTTNSTAPFGL. Ser-532 and Ser-536 each carry phosphoserine. The segment covering 533 to 543 has biased composition (polar residues); sequence PAVSPTTNSTA. Phosphothreonine is present on Thr-568. In terms of domain architecture, Calponin-homology (CH) spans 576 to 692; the sequence is MREEKELVEQ…TLLALGEKAP (117 aa).

Interacts (via LRR repeats) with unphosphorylated DOCK8 (via DHR-2 domain); the interaction prevents the interaction between DOCK8 and CDC42.

It is found in the cytoplasm. In terms of biological role, acts as a negative regulator of GTPase CDC42 by sequestering CDC42-guanine exchange factor DOCK8. Probably by preventing CDC42 activation, negatively regulates CD4(+) T-cell migration. The polypeptide is Leucine-rich repeat and calponin homology domain-containing protein 1 (LRCH1) (Homo sapiens (Human)).